A 234-amino-acid polypeptide reads, in one-letter code: Large ribosomal subunit protein uL1 (234 aa).

It belongs to the universal ribosomal protein uL1 family. As to quaternary structure, part of the 50S ribosomal subunit.

Functionally, binds directly to 23S rRNA. The L1 stalk is quite mobile in the ribosome, and is involved in E site tRNA release. In terms of biological role, protein L1 is also a translational repressor protein, it controls the translation of the L11 operon by binding to its mRNA. The chain is Large ribosomal subunit protein uL1 from Escherichia coli (strain 55989 / EAEC).